Reading from the N-terminus, the 244-residue chain is tRNA (guanine-N(1)-)-methyltransferase (244 aa).

S-adenosyl-L-methionine contacts are provided by residues Gly113 and 132–137 (IGDYVL).

Belongs to the RNA methyltransferase TrmD family. As to quaternary structure, homodimer.

It is found in the cytoplasm. The enzyme catalyses guanosine(37) in tRNA + S-adenosyl-L-methionine = N(1)-methylguanosine(37) in tRNA + S-adenosyl-L-homocysteine + H(+). Specifically methylates guanosine-37 in various tRNAs. The sequence is that of tRNA (guanine-N(1)-)-methyltransferase from Shouchella clausii (strain KSM-K16) (Alkalihalobacillus clausii).